Reading from the N-terminus, the 278-residue chain is Release factor glutamine methyltransferase (278 aa).

S-adenosyl-L-methionine is bound by residues 116-120, aspartate 139, tryptophan 168, and asparagine 182; that span reads GTGTG. 182–185 serves as a coordination point for substrate; that stretch reads NPPY.

Belongs to the protein N5-glutamine methyltransferase family. PrmC subfamily.

It catalyses the reaction L-glutaminyl-[peptide chain release factor] + S-adenosyl-L-methionine = N(5)-methyl-L-glutaminyl-[peptide chain release factor] + S-adenosyl-L-homocysteine + H(+). Methylates the class 1 translation termination release factors RF1/PrfA and RF2/PrfB on the glutamine residue of the universally conserved GGQ motif. The sequence is that of Release factor glutamine methyltransferase from Cereibacter sphaeroides (strain ATCC 17023 / DSM 158 / JCM 6121 / CCUG 31486 / LMG 2827 / NBRC 12203 / NCIMB 8253 / ATH 2.4.1.) (Rhodobacter sphaeroides).